The primary structure comprises 362 residues: MSFEKFFNTAVSSWMSQEGPDSDIVLSSRIRLARNIVDFQFPTVFNNEEAQQIVSLFEQTFAHRFYPSVGRFELLKMSELQPIEKRVLVEKHLISPHLAEDSPFGACLLSENEEISIMINEEDHIRIQCLFPGLQLTEALKVANELDDWIEEHVNYAFDEKLGYLTSCPTNVGTGMRASVMMHLPALVLTQQINRIIPAINQLGLVVRGTYGEGSEALGNIFQISNQITLGKSEEDIVEDLKSVVQQLIAQERMARETLVKTLNIQLEDRVFRSYGILANSRVIESKEAAQCLSDVRLGIDLGYIKNISRNILNELMILTQPGFLQQYAGGVLRPEERDVRRAALIRERLKMEERKAMEGDE.

The 232-residue stretch at 24 to 255 (IVLSSRIRLA…QQLIAQERMA (232 aa)) folds into the Phosphagen kinase C-terminal domain. ATP is bound by residues 27–31 (SSRIR), H92, R126, 177–181 (RASVM), and 208–213 (RGTYGE). The short motif at 338-343 (RDVRRA) is the RDXXRA motif of the pArg binding pocket involved in allosteric regulation element.

The protein belongs to the ATP:guanido phosphotransferase family.

It carries out the reaction L-arginyl-[protein] + ATP = N(omega)-phospho-L-arginyl-[protein] + ADP + H(+). With respect to regulation, appears to be allosterically activated by the binding of pArg-containing polypeptides to the pArg-binding pocket localized in the C-terminal domain of McsB. In terms of biological role, catalyzes the specific phosphorylation of arginine residues in a large number of proteins. Is part of the bacterial stress response system. Protein arginine phosphorylation has a physiologically important role and is involved in the regulation of many critical cellular processes, such as protein homeostasis, motility, competence, and stringent and stress responses, by regulating gene expression and protein activity. The chain is Protein-arginine kinase from Geobacillus sp. (strain WCH70).